Reading from the N-terminus, the 515-residue chain is Alpha-1B adrenergic receptor (515 aa).

Residues 1-45 (MNPDLDTGHNTSAPAQWGELKDANFTGPNQTSSNSTLPQLDVTRA) are Extracellular-facing. N-linked (GlcNAc...) asparagine glycosylation is found at Asn-10, Asn-24, and Asn-34. Residues 46–70 (ISVGLVLGAFILFAIVGNILVILSV) traverse the membrane as a helical segment. The Cytoplasmic portion of the chain corresponds to 71-83 (ACNRHLRTPTNYF). The chain crosses the membrane as a helical span at residues 84–105 (IVNLAIADLLLSFTVLPFSATL). The Extracellular portion of the chain corresponds to 106 to 115 (EVLGYWVLGR). Residues 116–141 (IFCDIWAAVDVLCCTASILSLCAISI) traverse the membrane as a helical segment. Cys-118 and Cys-195 form a disulfide bridge. Residues 142 to 161 (DRYIGVRYSLQYPTLVTRRK) lie on the Cytoplasmic side of the membrane. Residues 162–184 (AILALLSVWVLSTVISIGPLLGW) traverse the membrane as a helical segment. Over 185–201 (KEPAPNDDKECGVTEEP) the chain is Extracellular. The chain crosses the membrane as a helical span at residues 202–224 (FYALFSSLGSFYIPLAVILVMYC). Residues 225–295 (RVYIVAKRTT…FSREKKAAKT (71 aa)) lie on the Cytoplasmic side of the membrane. Position 264 is a phosphothreonine (Thr-264). A helical membrane pass occupies residues 296-319 (LGIVVGMFILCWLPFFIALPLGSL). The Extracellular portion of the chain corresponds to 320–326 (FSTLKPP). A helical transmembrane segment spans residues 327-351 (DAVFKVVFWLGYFNSCLNPIIYPCS). The Cytoplasmic segment spans residues 352-515 (SKEFKRAFMR…SNMPLAPGHF (164 aa)). Cys-365 carries S-palmitoyl cysteine lipidation. The short motif at 368–378 (RSGRRRRRRRR) is the Nuclear localization signal element. 2 disordered regions span residues 392-428 (GGSL…SPGY) and 473-515 (LLGE…PGHF). Positions 410 to 424 (SCMSGSQRTLPSASP) are enriched in polar residues.

The protein belongs to the G-protein coupled receptor 1 family. Adrenergic receptor subfamily. ADRA1B sub-subfamily. As to quaternary structure, homo- and heterooligomer. Heterooligomerizes with ADRA1B homooligomers in cardiac myocytes. Interacts with CAVIN4.

It is found in the nucleus membrane. It localises to the cell membrane. The protein resides in the cytoplasm. The protein localises to the membrane. Its subcellular location is the caveola. Its function is as follows. This alpha-adrenergic receptor mediates its action by association with G proteins that activate a phosphatidylinositol-calcium second messenger system. Its effect is mediated by G(q) and G(11) proteins. Nuclear ADRA1A-ADRA1B heterooligomers regulate phenylephrine (PE)-stimulated ERK signaling in cardiac myocytes. The sequence is that of Alpha-1B adrenergic receptor (ADRA1B) from Mesocricetus auratus (Golden hamster).